The following is a 159-amino-acid chain: H/ACA ribonucleoprotein complex subunit 2-like protein (159 aa).

The segment at 1–28 (MAKTPKKDKTEEKEEHEESGGNKEDRER) is disordered.

It belongs to the eukaryotic ribosomal protein eL8 family. Component of the small nucleolar ribonucleoprotein particle containing H/ACA-type snoRNAs (H/ACA snoRNPs). Component of the telomerase holoenzyme complex.

The protein localises to the nucleus. It localises to the nucleolus. In terms of biological role, required for ribosome biogenesis. Part of a complex which catalyzes pseudouridylation of rRNA. This involves the isomerization of uridine such that the ribose is subsequently attached to C5, instead of the normal N1. Pseudouridine ('psi') residues may serve to stabilize the conformation of rRNAs. The sequence is that of H/ACA ribonucleoprotein complex subunit 2-like protein from Branchiostoma belcheri (Amphioxus).